The chain runs to 625 residues: 1-deoxy-D-xylulose-5-phosphate synthase (625 aa).

Residues histidine 80 and 121 to 123 each bind thiamine diphosphate; that span reads GHS. Position 152 (aspartate 152) interacts with Mg(2+). Thiamine diphosphate is bound by residues 153 to 154, asparagine 181, tyrosine 290, and glutamate 371; that span reads GA. Asparagine 181 is a binding site for Mg(2+).

It belongs to the transketolase family. DXPS subfamily. In terms of assembly, homodimer. Mg(2+) serves as cofactor. The cofactor is thiamine diphosphate.

The catalysed reaction is D-glyceraldehyde 3-phosphate + pyruvate + H(+) = 1-deoxy-D-xylulose 5-phosphate + CO2. The protein operates within metabolic intermediate biosynthesis; 1-deoxy-D-xylulose 5-phosphate biosynthesis; 1-deoxy-D-xylulose 5-phosphate from D-glyceraldehyde 3-phosphate and pyruvate: step 1/1. Functionally, catalyzes the acyloin condensation reaction between C atoms 2 and 3 of pyruvate and glyceraldehyde 3-phosphate to yield 1-deoxy-D-xylulose-5-phosphate (DXP). In Haemophilus influenzae (strain ATCC 51907 / DSM 11121 / KW20 / Rd), this protein is 1-deoxy-D-xylulose-5-phosphate synthase.